A 310-amino-acid polypeptide reads, in one-letter code: Beta-ketoacyl-[acyl-carrier-protein] synthase III (310 aa).

Residues Cys112 and His235 contribute to the active site. Positions 236–240 (QANIR) are ACP-binding. Residue Asn265 is part of the active site.

The protein belongs to the thiolase-like superfamily. FabH family. As to quaternary structure, homodimer.

The protein localises to the cytoplasm. It carries out the reaction malonyl-[ACP] + acetyl-CoA + H(+) = 3-oxobutanoyl-[ACP] + CO2 + CoA. The protein operates within lipid metabolism; fatty acid biosynthesis. In terms of biological role, catalyzes the condensation reaction of fatty acid synthesis by the addition to an acyl acceptor of two carbons from malonyl-ACP. Catalyzes the first condensation reaction which initiates fatty acid synthesis and may therefore play a role in governing the total rate of fatty acid production. Possesses both acetoacetyl-ACP synthase and acetyl transacylase activities. Its substrate specificity determines the biosynthesis of branched-chain and/or straight-chain of fatty acids. The protein is Beta-ketoacyl-[acyl-carrier-protein] synthase III of Geobacillus kaustophilus (strain HTA426).